A 438-amino-acid chain; its full sequence is Cytochrome P450 monooxygenase claJ (438 aa).

Position 378 (cysteine 378) interacts with heme.

The protein belongs to the cytochrome P450 family. Heme is required as a cofactor.

The protein operates within secondary metabolite biosynthesis. Functionally, cytochrome P450 monooxygenase; part of the cla gene cluster that produces clavatol and ortho-quinone methide. The clavatol biosynthesis cluster cla and the terrestric acid cluster tra are both involved in the production of peniphenones and penilactones. The non-reducing PKS claF is responsible for the formation of clavatol from successive condensations of 3 malonyl-CoA units, presumably with a simple acetyl-CoA starter unit, and 2 methylation steps. The esterase claE probably collaborates with claF by catalyzing the hydrolysis of ACP-bound acyl intermediates to free the ACP from stalled intermediates. The clavatol oxidase claD then converts clavatol to hydroxyclavatol. Spontaneous dehydration of hydroxyclavatol leads to the accumulation of the highly active ortho-quinone methide. On the other hand, the PKS-NRPS hybrid traA is involved in the formation of crustosic acid, with the help of traB and traD. The polyketide synthase module (PKS) of traA is responsible for the synthesis of the polyketide backbone via the condensation of an acetyl-CoA starter unit with 3 malonyl-CoA units. The downstream nonribosomal peptide synthetase (NRPS) module then amidates the carboxyl end of the polyketide with L-malic acid. Because traA lacks a designated enoylreductase (ER) domain, the required activity is provided the enoyl reductase traG. Crustosic acid undergoes decarboxylation and isomerization to the terrestric acid, catalyzed by the 2-oxoglutarate-dependent dioxygenase traH. Both acids are further converted to the 2 gamma-butyrolactones (R)-5-methyltetronic acid and (S)-5-carboxylmethyltetronic acid, with involvement of the cytochrome P450 monooxygenase claJ. Spontaneous addition of the methide to these gamma-butyrolactones leads to peniphenone D and penilactone D, which undergo again stereospecific attacking by methide to give penilactones A and B. This is Cytochrome P450 monooxygenase claJ from Penicillium crustosum (Blue mold fungus).